The following is a 494-amino-acid chain: Glutamyl-tRNA(Gln) amidotransferase subunit A (494 aa).

Catalysis depends on charge relay system residues lysine 81 and serine 156. Serine 180 serves as the catalytic Acyl-ester intermediate.

The protein belongs to the amidase family. GatA subfamily. Heterotrimer of A, B and C subunits.

The enzyme catalyses L-glutamyl-tRNA(Gln) + L-glutamine + ATP + H2O = L-glutaminyl-tRNA(Gln) + L-glutamate + ADP + phosphate + H(+). Functionally, allows the formation of correctly charged Gln-tRNA(Gln) through the transamidation of misacylated Glu-tRNA(Gln) in organisms which lack glutaminyl-tRNA synthetase. The reaction takes place in the presence of glutamine and ATP through an activated gamma-phospho-Glu-tRNA(Gln). This Mycobacterium bovis (strain ATCC BAA-935 / AF2122/97) protein is Glutamyl-tRNA(Gln) amidotransferase subunit A.